The following is a 65-amino-acid chain: Large ribosomal subunit protein bL31 (65 aa).

4 residues coordinate Zn(2+): C16, C18, C36, and C39.

This sequence belongs to the bacterial ribosomal protein bL31 family. Type A subfamily. As to quaternary structure, part of the 50S ribosomal subunit. Zn(2+) is required as a cofactor.

Binds the 23S rRNA. The protein is Large ribosomal subunit protein bL31 of Geotalea daltonii (strain DSM 22248 / JCM 15807 / FRC-32) (Geobacter daltonii).